The chain runs to 974 residues: ATP-dependent RNA helicase glh-2 (974 aa).

Residues 212–435 form a disordered region; the sequence is HESGFGGGKS…SGFGGGNDGG (224 aa). Residues 215 to 250 are compositionally biased toward gly residues; the sequence is GFGGGKSGGFGGGNSGGSGFGSGGNSNGFGSGGGGQ. The span at 256-267 shows a compositional bias: polar residues; sequence NNNCFNCQQPGH. CCHC-type zinc fingers lie at residues 257-274 and 282-299; these read NNCF…DCPE and RVCY…DCPE. Basic and acidic residues-rich tracts occupy residues 268-282 and 293-307; these read RSND…REPR and NSRD…REGR. Over residues 309 to 364 the composition is skewed to gly residues; it reads GFTGGSSGFGGGNGGGTGFDSGLTNGFGSGNNGESGFGSGGFGGNSNGFGSGGGGQ. A compositionally biased stretch (polar residues) spans 370–381; sequence NNNCFNCQQPGH. 2 consecutive CCHC-type zinc fingers follow at residues 371 to 388 and 396 to 413; these read NNCF…DCPE and RVCY…DCPE. Basic and acidic residues-rich tracts occupy residues 382-396 and 407-421; these read RSND…REPR and NSRD…REGR. The segment covering 426–435 has biased composition (gly residues); that stretch reads SGFGGGNDGG. 2 consecutive CCHC-type zinc fingers follow at residues 453 to 470 and 473 to 490; these read MKCF…ECPE and RGCF…ECPN. A Q motif motif is present at residues 552–580; it reads KTFSEANLGETMKKNVAHAGYTKTTPIQQ. The 185-residue stretch at 583–767 folds into the Helicase ATP-binding domain; sequence LPLIHQGHDI…RNHLKEGYIM (185 aa). 596–603 provides a ligand contact to ATP; the sequence is AQTGSGKT. Positions 710–713 match the DEAD box motif; that stretch reads DEAD. The 148-residue stretch at 803–950 folds into the Helicase C-terminal domain; the sequence is DIDSYTTEKN…LVPEWMQGAS (148 aa).

It belongs to the DEAD box helicase family. DDX4/VASA subfamily. In terms of assembly, interacts (via C-terminus) with kgb-1.

The enzyme catalyses ATP + H2O = ADP + phosphate + H(+). Its function is as follows. Probable ATP-binding RNA helicase. The protein is ATP-dependent RNA helicase glh-2 (glh-2) of Caenorhabditis elegans.